The primary structure comprises 155 residues: RNA pyrophosphohydrolase (155 aa).

The Nudix hydrolase domain maps to 5-147 (RYRPNVAAIV…KRPVYKKVLE (143 aa)). The Nudix box signature appears at 42–63 (GGIDKGESPKEALLRELKEEIG).

Belongs to the Nudix hydrolase family. RppH subfamily. It depends on a divalent metal cation as a cofactor.

Accelerates the degradation of transcripts by removing pyrophosphate from the 5'-end of triphosphorylated RNA, leading to a more labile monophosphorylated state that can stimulate subsequent ribonuclease cleavage. The protein is RNA pyrophosphohydrolase of Nitratiruptor sp. (strain SB155-2).